The primary structure comprises 597 residues: Kelch-like protein 21 (597 aa).

One can recognise a BTB domain in the interval 35 to 103 (LDVTLEAAGG…SYTGRVAVSG (69 aa)). In terms of domain architecture, BACK spans 138–239 (CLDMQDFAEA…RRFYLLAHVE (102 aa)). Kelch repeat units follow at residues 287–335 (ILVL…ALGN), 336–382 (DIYV…VLDG), 384–422 (LYVV…ACRG), 424–463 (LYAI…SFAP), 464–512 (KTVT…VLGG), and 513–560 (KLYV…SIFR). The disordered stretch occupies residues 570–597 (GRGFELDGGSSDMDVGQPRPPQNPAELH). The segment covering 587 to 597 (PRPPQNPAELH) has biased composition (pro residues).

Component of the BCR(KLHL21) E3 ubiquitin ligase complex, at least composed of CUL3, KLHL21 and RBX1.

The protein localises to the cytoplasm. The protein resides in the cytoskeleton. Its subcellular location is the spindle. It functions in the pathway protein modification; protein ubiquitination. Functionally, substrate-specific adapter of a BCR (BTB-CUL3-RBX1) E3 ubiquitin-protein ligase complex required for efficient chromosome alignment and cytokinesis. The BCR(KLHL21) E3 ubiquitin ligase complex regulates localization of the chromosomal passenger complex (CPC) from chromosomes to the spindle midzone in anaphase and mediates the ubiquitination of AURKB. Ubiquitination of AURKB by BCR(KLHL21) E3 ubiquitin ligase complex may not lead to its degradation by the proteasome. In Bos taurus (Bovine), this protein is Kelch-like protein 21 (KLHL21).